The sequence spans 779 residues: MSRFPAVAGRAPRRQEEGERSRDLQEERPSAVCIADREEKGCTSQEGGTTPTFPIQKQRKKIIQAVRDNSFLIVTGNTGSGKTTQLPKYLYEAGFSQHGMIGVTQPRKVAAISVAQRVAEEMKCTLGSKVGYQVRFDDCSSKETAIKYMTDGCLLKHILGDPNLTKFSVIILDEAHERTLTTDILFGLLKKLFQEKSPNRKEHLKVVVMSATMELAKLSAFFGNCPIFDIPGRLYPVREKFCNLIGPRDRENTAYIQAIVKVTMDIHLNEMAGDILVFLTGQFEIEKSCELLFQMAESVDYDYDVQDTTLDGLLILPCYGSMTTDQQRRIFLPPPPGIRKCVISTNISATSLTIDGIRYVVDGGFVKQLNHNPRLGLDILEVVPISKSEALQRSGRAGRTASGKCFRIYSKDFWNQCMPDHVIPEIKRTSLTSVVLTLKCLAIHDVIRFPYLDPPNERLILEALKQLYQCDAIDRSGHVTRLGLSMVEFPLPPHLTCAVIKAASLDCEDLLLPIAAMLSVENVFIRPVDPEYQKEAEQRHRELAAKAGGFNDFATLAVIFEQCKSSGAPASWCQKHWIHWRCLFSAFRVEAQLRELIRKLKQQSDFPRETFEGPKHEVLRRCLCAGYFKNVARRSVGRTFCTMDGRGSPVHIHPSSALHEQETKLEWIVFHEVLVTTKVYARIVCPIRYEWVRDLLPKLHEFNAHDLSSVARREVREDARRRWTNKENVKQLKDGISKDVLKKMQRRNDDKSISDARARFLERKQQRTQDHSDTRKETG.

The disordered stretch occupies residues 1-53 (MSRFPAVAGRAPRRQEEGERSRDLQEERPSAVCIADREEKGCTSQEGGTTPTF). Over residues 13-41 (RRQEEGERSRDLQEERPSAVCIADREEKG) the composition is skewed to basic and acidic residues. Residues 42 to 53 (CTSQEGGTTPTF) are compositionally biased toward polar residues. A Helicase ATP-binding domain is found at 63-231 (IQAVRDNSFL…FGNCPIFDIP (169 aa)). 76–83 (GNTGSGKT) lines the ATP pocket. Residues 173–176 (DEAH) carry the DEAH box motif. The region spanning 263 to 442 (TMDIHLNEMA…SVVLTLKCLA (180 aa)) is the Helicase C-terminal domain. The interval 737 to 779 (SKDVLKKMQRRNDDKSISDARARFLERKQQRTQDHSDTRKETG) is disordered.

This sequence belongs to the DEAD box helicase family. DEAH subfamily.

It catalyses the reaction ATP + H2O = ADP + phosphate + H(+). Functionally, probable ATP-dependent RNA helicase. The polypeptide is Probable ATP-dependent RNA helicase DHX40 (DHX40) (Pongo abelii (Sumatran orangutan)).